Reading from the N-terminus, the 344-residue chain is 2,3,4,5-tetrahydropyridine-2,6-dicarboxylate N-succinyltransferase (344 aa).

E205 is a binding site for Mg(2+). E221 functions as the Acyl-anhydride intermediate in the catalytic mechanism. Residues R223, G238, S241, A264, 279-280, 287-289, K304, and 317-320 contribute to the succinyl-CoA site; these read EA, GTK, and RRNS.

Belongs to the type 2 tetrahydrodipicolinate N-succinyltransferase family. As to quaternary structure, homotrimer. Requires Magnesium ions are not essential for catalysis. as cofactor.

The protein localises to the cytoplasm. It catalyses the reaction (S)-2,3,4,5-tetrahydrodipicolinate + succinyl-CoA + H2O = (S)-2-succinylamino-6-oxoheptanedioate + CoA. The protein operates within amino-acid biosynthesis; L-lysine biosynthesis via DAP pathway; LL-2,6-diaminopimelate from (S)-tetrahydrodipicolinate (succinylase route): step 1/3. Its activity is regulated as follows. Weakly inhibited by D-2-aminopimelate. In terms of biological role, catalyzes the conversion of the cyclic tetrahydrodipicolinate (THDP) into the acyclic N-succinyl-L-2-amino-6-oxopimelate using succinyl-CoA. Displays succinyl transferase activity with L-2-aminopimelate and succinyl-CoA as substrates. The chain is 2,3,4,5-tetrahydropyridine-2,6-dicarboxylate N-succinyltransferase from Pseudomonas aeruginosa (strain ATCC 15692 / DSM 22644 / CIP 104116 / JCM 14847 / LMG 12228 / 1C / PRS 101 / PAO1).